Here is a 207-residue protein sequence, read N- to C-terminus: Small ribosomal subunit protein uS4c (207 aa).

Positions 92–153 (MRLDNILFRL…PKIYQSIITK (62 aa)) constitute an S4 RNA-binding domain.

Belongs to the universal ribosomal protein uS4 family. In terms of assembly, part of the 30S ribosomal subunit. Contacts protein S5. The interaction surface between S4 and S5 is involved in control of translational fidelity.

The protein resides in the plastid. The protein localises to the chloroplast. One of the primary rRNA binding proteins, it binds directly to 16S rRNA where it nucleates assembly of the body of the 30S subunit. Its function is as follows. With S5 and S12 plays an important role in translational accuracy. This chain is Small ribosomal subunit protein uS4c (rps4), found in Equisetum bogotense (Horsetail).